A 503-amino-acid chain; its full sequence is Probable cytosol aminopeptidase (503 aa).

Positions 268 and 273 each coordinate Mn(2+). Lys280 is an active-site residue. 3 residues coordinate Mn(2+): Asp291, Asp350, and Glu352. Arg354 is an active-site residue.

This sequence belongs to the peptidase M17 family. Mn(2+) serves as cofactor.

Its subcellular location is the cytoplasm. It catalyses the reaction Release of an N-terminal amino acid, Xaa-|-Yaa-, in which Xaa is preferably Leu, but may be other amino acids including Pro although not Arg or Lys, and Yaa may be Pro. Amino acid amides and methyl esters are also readily hydrolyzed, but rates on arylamides are exceedingly low.. It carries out the reaction Release of an N-terminal amino acid, preferentially leucine, but not glutamic or aspartic acids.. Its function is as follows. Presumably involved in the processing and regular turnover of intracellular proteins. Catalyzes the removal of unsubstituted N-terminal amino acids from various peptides. The chain is Probable cytosol aminopeptidase from Nocardia farcinica (strain IFM 10152).